A 448-amino-acid polypeptide reads, in one-letter code: Vicilin Cor a 11.0101 (448 aa).

Over residues 1–44 the composition is skewed to basic and acidic residues; it reads MLPKEDPELKKCKHKCRDERQFDEQQRRDGKQICEEKARERQQE. Residues 1–66 are disordered; the sequence is MLPKEDPELK…QEENPYVFQD (66 aa). N-linked (GlcNAc...) asparagine glycosylation is present at Asn-47. Cupin type-1 domains follow at residues 84 to 220 and 263 to 418; these read ENFT…EQLE and INLL…REVE. N-linked (GlcNAc...) asparagine glycosylation occurs at Asn-301. The Cu cation site is built by Cys-333, His-335, and His-362.

The protein belongs to the 7S seed storage protein family. Homotrimer. Homohexamer. N-glycosylated at Asn-301 mostly with xylosylated paucimannosidic-type N-glycan MMX (an N-linked glycan with beta-1,2-xylose residue in the structure) and also with MMXF (a complex N-linked glycan with alpha-1,3-fucose and beta-1,2-xylose residues in the structure). Post-translationally, a mixture of proteolytically processed and unprocessed subunits exist. In terms of tissue distribution, expressed in seed (at protein level). Expressed in seed.

Its function is as follows. Seed storage protein. Does not have superoxide dismutase (SOD) activity. The chain is Vicilin Cor a 11.0101 from Corylus avellana (European hazel).